A 273-amino-acid chain; its full sequence is Bis(5'-nucleosyl)-tetraphosphatase, symmetrical (273 aa).

Belongs to the Ap4A hydrolase family.

The catalysed reaction is P(1),P(4)-bis(5'-adenosyl) tetraphosphate + H2O = 2 ADP + 2 H(+). Functionally, hydrolyzes diadenosine 5',5'''-P1,P4-tetraphosphate to yield ADP. The chain is Bis(5'-nucleosyl)-tetraphosphatase, symmetrical from Histophilus somni (strain 129Pt) (Haemophilus somnus).